The sequence spans 443 residues: ATP-dependent protease ATPase subunit HslU (443 aa).

Residues I19 and 61-66 (GVGKTE) contribute to the ATP site. Positions 139 to 158 (PPRDIGFSQPEEKDSNTRQV) are disordered. ATP is bound by residues D256, E321, and R393.

The protein belongs to the ClpX chaperone family. HslU subfamily. A double ring-shaped homohexamer of HslV is capped on each side by a ring-shaped HslU homohexamer. The assembly of the HslU/HslV complex is dependent on binding of ATP.

Its subcellular location is the cytoplasm. Its function is as follows. ATPase subunit of a proteasome-like degradation complex; this subunit has chaperone activity. The binding of ATP and its subsequent hydrolysis by HslU are essential for unfolding of protein substrates subsequently hydrolyzed by HslV. HslU recognizes the N-terminal part of its protein substrates and unfolds these before they are guided to HslV for hydrolysis. This chain is ATP-dependent protease ATPase subunit HslU, found in Cupriavidus taiwanensis (strain DSM 17343 / BCRC 17206 / CCUG 44338 / CIP 107171 / LMG 19424 / R1) (Ralstonia taiwanensis (strain LMG 19424)).